We begin with the raw amino-acid sequence, 269 residues long: Novel plant SNARE 13 (269 aa).

The Cytoplasmic segment spans residues 1 to 217; sequence MASNLPMSPQ…IGRQVATDKC (217 aa). Residues 33-94 are a coiled coil; sequence DKIKDSTRQS…KQSMIKELNS (62 aa). The residue at position 74 (serine 74) is a Phosphoserine. A t-SNARE coiled-coil homology domain is found at 146-208; it reads MKRMDETDQA…KKASQLVKEI (63 aa). Residues 218 to 238 form a helical; Anchor for type IV membrane protein membrane-spanning segment; the sequence is IMGFLFLIVCGVVAIIIVKIV. Topologically, residues 239-269 are vesicular; it reads NPNNKDIRDIPGLAPPAQSRKLLYLRNQDYM.

The protein belongs to the novel plant SNARE family.

The protein resides in the membrane. Vesicle trafficking protein that functions in the secretory pathway. The chain is Novel plant SNARE 13 (NPSN13) from Arabidopsis thaliana (Mouse-ear cress).